The chain runs to 103 residues: Omega toxin Ap5 (103 aa).

The first 22 residues, 1-22 (MNTIQVILFAVVLVLTVTVGQA), serve as a signal peptide directing secretion. Positions 23–57 (DEDSAETSLLRKLEEAEASMFGQYLEESKNSREKR) are excised as a propeptide. Intrachain disulfides connect Cys-58/Cys-73, Cys-65/Cys-78, and Cys-72/Cys-93.

This sequence belongs to the neurotoxin 14 (magi-1) family. 08 (Ltx-4) subfamily. As to expression, expressed by the venom duct.

Its subcellular location is the secreted. Its function is as follows. Shows a weak inhibition on the voltage-gated calcium channel Cav2.1/CACNA1A and some voltage-gated sodium channels (with 1 uM toxin tested: 22.08% inhibition on Cav2.1/CACNA1A, 6.6% on Nav1.1/SCN1A, 4.2% on Nav1.5, and 16% on Nav1.7). Shows a weak inhibition on the voltage-gated calcium channel Cav2.1/CACNA1A (28.06% at 1 uM). This chain is Omega toxin Ap5, found in Acanthoscurria paulensis (Brazilian giant black tarantula spider).